The primary structure comprises 199 residues: FMN-dependent NADH:quinone oxidoreductase (199 aa).

Residues S9, 15 to 17, and 95 to 98 each bind FMN; these read SNS and MYNF.

This sequence belongs to the azoreductase type 1 family. Homodimer. FMN is required as a cofactor.

It catalyses the reaction 2 a quinone + NADH + H(+) = 2 a 1,4-benzosemiquinone + NAD(+). It carries out the reaction N,N-dimethyl-1,4-phenylenediamine + anthranilate + 2 NAD(+) = 2-(4-dimethylaminophenyl)diazenylbenzoate + 2 NADH + 2 H(+). Its function is as follows. Quinone reductase that provides resistance to thiol-specific stress caused by electrophilic quinones. Also exhibits azoreductase activity. Catalyzes the reductive cleavage of the azo bond in aromatic azo compounds to the corresponding amines. The sequence is that of FMN-dependent NADH:quinone oxidoreductase from Aromatoleum aromaticum (strain DSM 19018 / LMG 30748 / EbN1) (Azoarcus sp. (strain EbN1)).